Consider the following 169-residue polypeptide: MKGRIELGDVTPHNIKQLKRLNQVIFPVSYNDKFYKDVLEVGELAKLAYFNDIAVGAVCCRVDHSQNQKRLYIMTLGCLAPYRRLGIGTKMLNHVLNICEKDGTFDNIYLHVQISNESAIDFYRKFGFEIIETKKNYYKRIEPADAHVLQKNLKISSPGQNADVQKSEN.

The N-acetyltransferase domain occupies 5-154 (IELGDVTPHN…DAHVLQKNLK (150 aa)). Tyr30 is a substrate binding site. The active site involves Tyr72. Met74 serves as a coordination point for substrate. 76-89 (LGCLAPYRRLGIGT) provides a ligand contact to acetyl-CoA. 78 to 89 (CLAPYRRLGIGT) contacts CoA. The active site involves His111. 116–125 (NESAIDFYRK) lines the CoA pocket. Positions 137–140 (YYKR) are substrate.

The protein belongs to the acetyltransferase family. GNAT subfamily.

The protein localises to the cytoplasm. The protein resides in the nucleus. The enzyme catalyses N-terminal L-methionyl-L-alanyl-[protein] + acetyl-CoA = N-terminal N(alpha)-acetyl-L-methionyl-L-alanyl-[protein] + CoA + H(+). It carries out the reaction N-terminal L-methionyl-L-seryl-[protein] + acetyl-CoA = N-terminal N(alpha)-acetyl-L-methionyl-L-seryl-[protein] + CoA + H(+). The catalysed reaction is N-terminal L-methionyl-L-valyl-[protein] + acetyl-CoA = N-terminal N(alpha)-acetyl-L-methionyl-L-valyl-[protein] + CoA + H(+). It catalyses the reaction N-terminal L-methionyl-L-threonyl-[protein] + acetyl-CoA = N-terminal N(alpha)-acetyl-L-methionyl-L-threonyl-[protein] + CoA + H(+). The enzyme catalyses N-terminal L-methionyl-L-lysyl-[protein] + acetyl-CoA = N-terminal N(alpha)-acetyl-L-methionyl-L-lysyl-[protein] + CoA + H(+). It carries out the reaction N-terminal L-methionyl-L-leucyl-[protein] + acetyl-CoA = N-terminal N(alpha)-acetyl-L-methionyl-L-leucyl-[protein] + CoA + H(+). The catalysed reaction is N-terminal L-methionyl-L-phenylalanyl-[protein] + acetyl-CoA = N-terminal N(alpha)-acetyl-L-methionyl-L-phenylalanyl-[protein] + CoA + H(+). It catalyses the reaction N-terminal L-methionyl-L-tyrosyl-[protein] + acetyl-CoA = N-terminal N(alpha)-acetyl-L-methionyl-L-tyrosyl-[protein] + CoA + H(+). Its function is as follows. N-alpha-acetyltransferase that acetylates the N-terminus of proteins that retain their initiating methionine. Has a broad substrate specificity: able to acetylate the initiator methionine of most peptides, except for those with a proline in second position. Also displays N-epsilon-acetyltransferase activity by mediating acetylation of the side chain of specific lysines on proteins. The relevance of N-epsilon-acetyltransferase activity is however unclear. Required for sister chromatid cohesion during mitosis by promoting binding of CDCA5/sororin to cohesin. The polypeptide is N-alpha-acetyltransferase 50 (naa50) (Xenopus tropicalis (Western clawed frog)).